An 873-amino-acid chain; its full sequence is Disks large homolog 1 (873 aa).

The L27 domain occupies 4 to 64; sequence RQKDAQRALQ…YYEVSLQDTE (61 aa). The disordered stretch occupies residues 62–135; sequence DTEDKPIEDS…SPHIPGDARP (74 aa). Residues 63–77 show a composition bias toward basic and acidic residues; it reads TEDKPIEDSSLKSRE. The segment covering 85–96 has biased composition (polar residues); that stretch reads WNLSVPPSTTGP. PDZ domains are found at residues 230 to 317 and 325 to 412; these read EITL…RRRK and DVKL…AKPT. The span at 441 to 456 shows a compositional bias: polar residues; the sequence is SYLSQPLTPATPSRYS. Positions 441-464 are disordered; sequence SYLSQPLTPATPSRYSPVSKGMLG. The PDZ 3 domain maps to 474 to 555; the sequence is KIVLHRGTTG…TVTIIAQYRP (82 aa). The interval 636–662 is disordered; sequence NKDSGEQDTSDVDQHVTSNASDSESSF. Positions 650 to 662 are enriched in polar residues; it reads HVTSNASDSESSF. The 176-residue stretch at 683-858 folds into the Guanylate kinase-like domain; sequence SRPVIILGPM…IYNQVKQIIE (176 aa).

Belongs to the MAGUK family.

It localises to the cell membrane. The protein localises to the endoplasmic reticulum membrane. Its subcellular location is the cell junction. It is found in the apical cell membrane. Functionally, essential multidomain scaffolding protein required for normal development. Recruits channels, receptors and signaling molecules to discrete plasma membrane domains in polarized cells. Promotes epithelial cell layer barrier function via maintaining cell-cell adhesion. May play a role in adherens junction assembly, signal transduction and cell proliferation. May play a role in synapse assembly and function. In Danio rerio (Zebrafish), this protein is Disks large homolog 1 (dlg1).